The sequence spans 77 residues: Acyl carrier protein (77 aa).

The Carrier domain maps to 2-77 (STVEERVKKI…DAIDYILANQ (76 aa)). Ser37 is subject to O-(pantetheine 4'-phosphoryl)serine.

Belongs to the acyl carrier protein (ACP) family. 4'-phosphopantetheine is transferred from CoA to a specific serine of apo-ACP by AcpS. This modification is essential for activity because fatty acids are bound in thioester linkage to the sulfhydryl of the prosthetic group.

Its subcellular location is the cytoplasm. Its pathway is lipid metabolism; fatty acid biosynthesis. Functionally, carrier of the growing fatty acid chain in fatty acid biosynthesis. The sequence is that of Acyl carrier protein from Hahella chejuensis (strain KCTC 2396).